The sequence spans 100 residues: Urease subunit gamma (100 aa).

Belongs to the urease gamma subunit family. In terms of assembly, heterotrimer of UreA (gamma), UreB (beta) and UreC (alpha) subunits. Three heterotrimers associate to form the active enzyme.

The protein resides in the cytoplasm. It carries out the reaction urea + 2 H2O + H(+) = hydrogencarbonate + 2 NH4(+). It participates in nitrogen metabolism; urea degradation; CO(2) and NH(3) from urea (urease route): step 1/1. This Prochlorococcus marinus (strain MIT 9215) protein is Urease subunit gamma.